Here is a 309-residue protein sequence, read N- to C-terminus: Elongator complex protein 5 (309 aa).

Phosphoserine occurs at positions 3 and 4.

This sequence belongs to the ELP5 family. As to quaternary structure, component of the elongator complex, which consists of ELP1/IKI3, ELP2, ELP3, ELP4, ELP5/IKI1 and ELP6. The elongator complex is composed of two copies of the Elp123 subcomplex (composed of ELP1/IKI3, ELP2 and ELP3) and two copies of the Elp456 subcomplex (composed of ELP4, ELP5/IKI1 and ELP6). The Elp123 subcomplex forms a two-lobed scaffold, which binds the Elp456 subcomplex asymmetrically. In each lobe, ELP2 is tightly sandwiched between ELP1/IKI3 and ELP3. The Elp123 subcomplex binds tRNA through ELP1/IKI3 and ELP3 and can bind 2 tRNAs simultaneously. tRNA-binding by the Elp123 subcomplex induces conformational rearrangements which precisely position the targeted anticodon base in the active site. The Elp456 subcomplex binds tRNA and has ATPase activity. Interacts with KTI11/DPH3.

Its subcellular location is the cytoplasm. The protein localises to the nucleus. The protein operates within tRNA modification; 5-methoxycarbonylmethyl-2-thiouridine-tRNA biosynthesis. Its function is as follows. Component of the elongator complex which is required for multiple tRNA modifications, including mcm5U (5-methoxycarbonylmethyl uridine), mcm5s2U (5-methoxycarbonylmethyl-2-thiouridine), and ncm5U (5-carbamoylmethyl uridine). The elongator complex catalyzes formation of carboxymethyluridine in the wobble base at position 34 in tRNAs. It functions as a gamma-toxin target (TOT); disruption of the complex confers resistance to Kluyveromyces lactis toxin zymocin (pGKL1 killer toxin). May also be involved in sensitivity to Pichia inositovora toxin. This Saccharomyces cerevisiae (strain ATCC 204508 / S288c) (Baker's yeast) protein is Elongator complex protein 5 (IKI1).